The sequence spans 431 residues: Glucose-1-phosphate adenylyltransferase (431 aa).

Residue Lys-39 coordinates beta-D-fructose 1,6-bisphosphate. AMP is bound by residues Arg-40, His-46, and Arg-52. Residue Tyr-114 coordinates alpha-D-glucose 1-phosphate. Arg-130 serves as a coordination point for AMP. Residues Gly-179, 194-195 (EK), and Ser-212 each bind alpha-D-glucose 1-phosphate. Glu-370 and Arg-386 together coordinate AMP. Residues 419 to 423 (REMLR) and 429 to 431 (QER) each bind beta-D-fructose 1,6-bisphosphate.

Belongs to the bacterial/plant glucose-1-phosphate adenylyltransferase family. Homotetramer.

It carries out the reaction alpha-D-glucose 1-phosphate + ATP + H(+) = ADP-alpha-D-glucose + diphosphate. The protein operates within glycan biosynthesis; glycogen biosynthesis. Its activity is regulated as follows. Allosterically activated by fructose-1,6-bisphosphate (F16BP) and inhibited by AMP. In terms of biological role, involved in the biosynthesis of ADP-glucose, a building block required for the elongation reactions to produce glycogen. Catalyzes the reaction between ATP and alpha-D-glucose 1-phosphate (G1P) to produce pyrophosphate and ADP-Glc. This is Glucose-1-phosphate adenylyltransferase from Escherichia coli O45:K1 (strain S88 / ExPEC).